The sequence spans 136 residues: uncharacterized protein (136 aa).

An N-terminal signal peptide occupies residues 1-19; sequence MKKLLMVILGIALIGMAYA.

This is an uncharacterized protein from Methanocaldococcus jannaschii (strain ATCC 43067 / DSM 2661 / JAL-1 / JCM 10045 / NBRC 100440) (Methanococcus jannaschii).